The primary structure comprises 90 residues: Acylphosphatase (90 aa).

Residues 3–90 enclose the Acylphosphatase-like domain; it reads QYRIIVDGRV…DGFQKFNISY (88 aa). Catalysis depends on residues R18 and N36.

This sequence belongs to the acylphosphatase family.

The enzyme catalyses an acyl phosphate + H2O = a carboxylate + phosphate + H(+). This Bacillus licheniformis (strain ATCC 14580 / DSM 13 / JCM 2505 / CCUG 7422 / NBRC 12200 / NCIMB 9375 / NCTC 10341 / NRRL NRS-1264 / Gibson 46) protein is Acylphosphatase (acyP).